The primary structure comprises 733 residues: tRNA (guanine(27)-N(2))-dimethyltransferase (733 aa).

Over residues 1 to 18 (MENMAEEELLPLEKEEVE) the composition is skewed to acidic residues. The tract at residues 1–78 (MENMAEEELL…LASAPEEAKS (78 aa)) is disordered. The residue at position 26 (threonine 26) is a Phosphothreonine. 2 stretches are compositionally biased toward low complexity: residues 39-49 (PDSALDSAPTP) and 57-73 (PALA…ASAP). Serine 66 carries the post-translational modification Phosphoserine. Residues 135 to 139 (HKLRR) carry the Nucleolar localization signal motif. Residues 184–206 (YHCIICSATITRRTDMLGHVRRH) form a C2H2-type zinc finger. A Trm1 methyltransferase domain is found at 227–688 (EILKEADTDV…APLMQFKSIL (462 aa)). S-adenosyl-L-methionine-binding residues include arginine 260, aspartate 307, aspartate 357, and alanine 358. Zn(2+) is bound by residues cysteine 488, cysteine 491, cysteine 513, and cysteine 515. Lysine 585 is covalently cross-linked (Glycyl lysine isopeptide (Lys-Gly) (interchain with G-Cter in SUMO2)). 2 positions are modified to phosphoserine: serine 612 and serine 707.

Belongs to the class I-like SAM-binding methyltransferase superfamily. Trm1 family. Widely expressed.

The protein resides in the nucleus. It is found in the nucleolus. It carries out the reaction guanosine(27) in tRNA(Tyr) + 2 S-adenosyl-L-methionine = N(2)-dimethylguanosine(27) in tRNA(Tyr) + 2 S-adenosyl-L-homocysteine + 2 H(+). In terms of biological role, specifically dimethylates a single guanine residue at position 27 of tRNA(Tyr) using S-adenosyl-L-methionine as donor of the methyl groups. Dimethylation at position 27 of tRNA(Tyr) is required for efficient translation of tyrosine codons. Also required to maintain 3-(3-amino-3-carboxypropyl)uridine (acp3U) in the D-loop of several cytoplasmic tRNAs. The sequence is that of tRNA (guanine(27)-N(2))-dimethyltransferase from Homo sapiens (Human).